The following is a 368-amino-acid chain: Ribosomal RNA large subunit methyltransferase M (368 aa).

Residues Ser189, 222–225 (CPGG), Asp241, Asp261, and Asp278 contribute to the S-adenosyl-L-methionine site. The active-site Proton acceptor is the Lys307.

The protein belongs to the class I-like SAM-binding methyltransferase superfamily. RNA methyltransferase RlmE family. RlmM subfamily. As to quaternary structure, monomer.

It is found in the cytoplasm. It carries out the reaction cytidine(2498) in 23S rRNA + S-adenosyl-L-methionine = 2'-O-methylcytidine(2498) in 23S rRNA + S-adenosyl-L-homocysteine + H(+). In terms of biological role, catalyzes the 2'-O-methylation at nucleotide C2498 in 23S rRNA. The sequence is that of Ribosomal RNA large subunit methyltransferase M from Yersinia pseudotuberculosis serotype O:1b (strain IP 31758).